The sequence spans 453 residues: Na(+)/H(+) antiporter NhaA (453 aa).

11 helical membrane passes run 28-48, 79-99, 115-135, 144-164, 173-193, 196-216, 241-261, 321-341, 355-375, 393-413, and 424-444; these read FLHI…AALI, LHFL…GMEI, ALPL…YFIL, GWAV…ALLG, VFLL…IAVF, GGMD…VLGM, TGAH…VFAP, VAFG…LDGI, VLIA…FLMV, LVGL…TLAF, and LGIL…GFFQ.

It belongs to the NhaA Na(+)/H(+) (TC 2.A.33) antiporter family.

The protein resides in the cell inner membrane. It catalyses the reaction Na(+)(in) + 2 H(+)(out) = Na(+)(out) + 2 H(+)(in). Functionally, na(+)/H(+) antiporter that extrudes sodium in exchange for external protons. The sequence is that of Na(+)/H(+) antiporter NhaA from Janthinobacterium sp. (strain Marseille) (Minibacterium massiliensis).